We begin with the raw amino-acid sequence, 767 residues long: ATP-dependent rRNA helicase SPB4 (767 aa).

The Q motif signature appears at 28–56; it reads WTKLTPPLTPWVVSLLSDLGFGQMTPVQA. The 233-residue stretch at 59–291 folds into the Helicase ATP-binding domain; sequence IPLFVSHKDV…RIGLRNPVRV (233 aa). Position 72 to 79 (72 to 79) interacts with ATP; sequence AVTGSGKT. The segment at 132–176 is disordered; it reads HVQAQQQQDQDEQDEQDEQEAQSDSDTDPDASTALNNKRKSSNHL. Over residues 140–160 the composition is skewed to acidic residues; that stretch reads DQDEQDEQDEQEAQSDSDTDP. A DEAD box motif is present at residues 239–242; sequence DEAD. In terms of domain architecture, Helicase C-terminal spans 330–507; the sequence is QLARIVLFES…ILEPAEDDAS (178 aa). The segment at 609-767 is disordered; the sequence is KLSGDQAKPP…NADAEPFFVI (159 aa). Composition is skewed to basic and acidic residues over residues 636-645 and 659-681; these read CDSHDSDDAH and LERE…ANRE. The stretch at 654–746 forms a coiled coil; that stretch reads KNKRKLEREK…RANSDNDDAM (93 aa). The span at 690 to 700 shows a compositional bias: polar residues; sequence LKTQAAESSSN. Residues 701–746 show a composition bias toward basic and acidic residues; sequence AKHEPPQDDHDEHDWNDDYRKLQKDKRQQRQRNKADRANSDNDDAM. Low complexity predominate over residues 749 to 761; that stretch reads NSDSDAAAANADA.

This sequence belongs to the DEAD box helicase family. DDX55/SPB4 subfamily. In terms of assembly, component of pre-60S ribosomal complexes.

The protein localises to the nucleus. It is found in the nucleolus. The catalysed reaction is ATP + H2O = ADP + phosphate + H(+). Functionally, ATP-binding RNA helicase involved in the biogenesis of 60S ribosomal subunits. Binds 90S pre-ribosomal particles and dissociates from pre-60S ribosomal particles after processing of 27SB pre-rRNA. Required for the normal formation of 18S rRNA through the processing of pre-rRNAs at sites A0, A1 and A2, and the normal formation of 25S and 5.8S rRNAs through the processing of pre-rRNAs at sites C1 and C2. The polypeptide is ATP-dependent rRNA helicase SPB4 (Mycosarcoma maydis (Corn smut fungus)).